The primary structure comprises 182 residues: Transmembrane protein 11 homolog, mitochondrial (182 aa).

Phosphoserine is present on Ser25. Transmembrane regions (helical) follow at residues 70-89 (TAVA…RDRP) and 91-108 (IAAP…LYTV).

Belongs to the TMEM11 family.

It is found in the mitochondrion inner membrane. Its function is as follows. Plays a role in mitochondrial morphogenesis. The polypeptide is Transmembrane protein 11 homolog, mitochondrial (Pmi) (Drosophila melanogaster (Fruit fly)).